The sequence spans 99 residues: Putative gene 45 protein (99 aa).

The sequence is that of Putative gene 45 protein (45) from Bacillus phage SP01 (Bacteriophage SP01).